Reading from the N-terminus, the 187-residue chain is KS71A fimbrillin (187 aa).

Residues 1 to 21 form the signal peptide; it reads MIKSVIAGAVAMAVVSFGANA. A disulfide bond links cysteine 43 and cysteine 82.

It belongs to the fimbrial protein family.

It is found in the fimbrium. In terms of biological role, fimbriae (also called pili), polar filaments radiating from the surface of the bacterium to a length of 0.5-1.5 micrometers and numbering 100-300 per cell, enable bacteria to colonize the epithelium of specific host organs. This Escherichia coli protein is KS71A fimbrillin (KS71A).